Reading from the N-terminus, the 386-residue chain is MSAAPPRRVVICGGGVVGACTAYFLATHAASPTVPTLVERCAPACAASGKAGGFLALDWCDSTPALSRLARASFALHRRLADALGGADAYGFRPVHTLSVLLPPHPAASSSPPHPLLPPWVDPSASAAPPRELGTPDTTAQVHPGLFTKAVLAASGAEVVIGEVERVAVAWDGRVAGVVVKGRDGVLDADAVVLALGPWSGRLEVVSEVFDVSGLKAHSIVLRPREPEKVTPHCLFLSYQPEPGAKMLDPEVYPRPTGEVYICGMSKDENPPDDPATITGEPDSIAMLHKIAGKVSSQLKKEEGAEVVAEQACYLPCTADGLPVIGEIPGVKGCYVATGHSCWGILNGPATGAALAELILDGKAKIVDLEPFSPARFLKRRSRRGV.

The FAD site is built by Gly-14, Gly-15, Val-16, Val-17, Glu-39, Arg-40, Ala-51, Gly-52, and Gly-53. Residues 109 to 138 (SSSPPHPLLPPWVDPSASAAPPRELGTPDT) form a disordered region. Positions 112-121 (PPHPLLPPWV) are enriched in pro residues. Arg-174, Val-175, and Ala-176 together coordinate FAD. D-serine-binding residues include Tyr-253, Tyr-261, and Lys-332. D-proline is bound by residues Tyr-261 and Lys-332. FAD is bound by residues Lys-332, Gly-344, Ile-345, Gly-362, and Ala-364. Position 332 (Lys-332) interacts with D-dopa. Gly-362 contributes to the D-serine binding site. Gly-362 lines the D-proline pocket. Position 362 (Gly-362) interacts with D-dopa.

It belongs to the DAMOX/DASOX family.

It carries out the reaction a D-alpha-amino acid + O2 + H2O = a 2-oxocarboxylate + H2O2 + NH4(+). It catalyses the reaction D-alanine + O2 + H2O = pyruvate + H2O2 + NH4(+). The enzyme catalyses D-aspartate + O2 + H2O = oxaloacetate + H2O2 + NH4(+). Its function is as follows. Catalyzes the oxidative deamination of D-amino acids with broad substrate specificity. Enables the organism to utilize D-amino acids as a source of nutrients. This is D-amino-acid oxidase from Zea mays (Maize).